Reading from the N-terminus, the 267-residue chain is Regulatory protein RecX (267 aa).

This sequence belongs to the RecX family.

Its subcellular location is the cytoplasm. Functionally, modulates RecA activity. In Staphylococcus haemolyticus (strain JCSC1435), this protein is Regulatory protein RecX.